Here is a 420-residue protein sequence, read N- to C-terminus: Gamma-glutamyl phosphate reductase (420 aa).

Belongs to the gamma-glutamyl phosphate reductase family.

The protein localises to the cytoplasm. It carries out the reaction L-glutamate 5-semialdehyde + phosphate + NADP(+) = L-glutamyl 5-phosphate + NADPH + H(+). Its pathway is amino-acid biosynthesis; L-proline biosynthesis; L-glutamate 5-semialdehyde from L-glutamate: step 2/2. Functionally, catalyzes the NADPH-dependent reduction of L-glutamate 5-phosphate into L-glutamate 5-semialdehyde and phosphate. The product spontaneously undergoes cyclization to form 1-pyrroline-5-carboxylate. This Neisseria meningitidis serogroup A / serotype 4A (strain DSM 15465 / Z2491) protein is Gamma-glutamyl phosphate reductase.